The sequence spans 325 residues: Probable cell division protein WhiA (325 aa).

Residues 280-313 (SLKELGSMLKNPLGKSGVNHRLRKIDKIAEELRK) constitute a DNA-binding region (H-T-H motif).

Belongs to the WhiA family.

Its function is as follows. Involved in cell division and chromosome segregation. This is Probable cell division protein WhiA from Caldicellulosiruptor saccharolyticus (strain ATCC 43494 / DSM 8903 / Tp8T 6331).